A 225-amino-acid polypeptide reads, in one-letter code: uncharacterized protein (225 aa).

A run of 6 helical transmembrane segments spans residues 1 to 21 (MFIG…AKKV), 31 to 51 (SPLL…NVPY), 56 to 76 (LGGG…AIPL), 88 to 108 (VEII…TALI), 145 to 165 (VTAV…PMVI), and 205 to 225 (VSMI…LSFM).

Belongs to the YohK (E.coli)/YwbG (IPA-22R) (B.subtilis) family.

The protein localises to the cell membrane. This is an uncharacterized protein from Bacillus subtilis (strain 168).